A 286-amino-acid chain; its full sequence is MMDIFLAILPAIFWGSIVLFNVKLGGGPYSQTLGTTFGALIFSIVVYIFMKPVLTPTVIGVGVVSGLFWALGQANQLKSIDLMGVSRTMPISTGLQLVATTLFGVIVFHEWSTTISVVLGILALVCIIIGVILTSLQSEEEKNAEQAANFKRGIVILLISTVGYLVYVVVIRLFNVDGWSALLPQAVGMVLGGILLTFKHHPFNKYAIRNIIPGLIWAAGNMFLFISQPRVGVATSFSLSQMGIIISTLGGILILGEKKTKRQLTGIVVGIVFIIAAGIMLGIAKS.

The next 10 helical transmembrane spans lie at 4–22 (IFLAILPAIFWGSIVLFNV), 27–49 (GPYSQTLGTTFGALIFSIVVYIF), 53–72 (VLTPTVIGVGVVSGLFWALG), 85–107 (VSRTMPISTGLQLVATTLFGVIV), 111–133 (WSTTISVVLGILALVCIIIGVIL), 154–176 (IVILLISTVGYLVYVVVIRLFNV), 181–198 (ALLPQAVGMVLGGILLTF), 211–228 (IIPGLIWAAGNMFLFISQ), 233–255 (VATSFSLSQMGIIISTLGGILIL), and 267–284 (IVVGIVFIIAAGIMLGIA).

Belongs to the GRP transporter (TC 2.A.7.5) family.

The protein resides in the cell membrane. Functionally, involved in the uptake of glucose. This Bacillus cereus (strain ATCC 14579 / DSM 31 / CCUG 7414 / JCM 2152 / NBRC 15305 / NCIMB 9373 / NCTC 2599 / NRRL B-3711) protein is Probable glucose uptake protein GlcU (glcU).